The primary structure comprises 349 residues: UDP-3-O-acylglucosamine N-acyltransferase 1 (349 aa).

His-241 functions as the Proton acceptor in the catalytic mechanism.

It belongs to the transferase hexapeptide repeat family. LpxD subfamily. As to quaternary structure, homotrimer.

The enzyme catalyses a UDP-3-O-[(3R)-3-hydroxyacyl]-alpha-D-glucosamine + a (3R)-hydroxyacyl-[ACP] = a UDP-2-N,3-O-bis[(3R)-3-hydroxyacyl]-alpha-D-glucosamine + holo-[ACP] + H(+). Its pathway is bacterial outer membrane biogenesis; LPS lipid A biosynthesis. Its function is as follows. Catalyzes the N-acylation of UDP-3-O-acylglucosamine using 3-hydroxyacyl-ACP as the acyl donor. Is involved in the biosynthesis of lipid A, a phosphorylated glycolipid that anchors the lipopolysaccharide to the outer membrane of the cell. The chain is UDP-3-O-acylglucosamine N-acyltransferase 1 from Gloeobacter violaceus (strain ATCC 29082 / PCC 7421).